A 202-amino-acid chain; its full sequence is Snake venom metalloproteinase TM-1 (202 aa).

Pyrrolidone carboxylic acid is present on glutamine 1. Residues 7 to 202 (RYVMLAIVAD…TNPQCILNAP (196 aa)) enclose the Peptidase M12B domain. Intrachain disulfides connect cysteine 118-cysteine 197, cysteine 159-cysteine 181, and cysteine 161-cysteine 164. Residue histidine 143 coordinates Zn(2+). Residue glutamate 144 is part of the active site. Zn(2+)-binding residues include histidine 147 and histidine 153.

Belongs to the venom metalloproteinase (M12B) family. P-I subfamily. Monomer. The cofactor is Zn(2+). The N-terminus is blocked. In terms of processing, not glycosylated. In terms of tissue distribution, expressed by the venom gland.

The protein localises to the secreted. Its activity is regulated as follows. Inhibited by EDTA and 1,10-phenanthroline. Is also inhibited by endogenous tripeptide inhibitors pyroGlu-Asn-Trp, pyroGlu-Gln-Trp, and pyroGlu-Lys-Trp. Functionally, potent fibrinogenolytic protease which cleaves mainly the Aalpha (FGA) and Bbeta (FGB) chains of fibrinogen and slightly the gamma chain (FGG). Shows preference for substrates having a moderate-size and hydrophobic residue at the P1' position. Preferentially cleaves Ala-|-Leu and Tyr-|-Leu bonds. Is more susceptible to tripeptide inhibitors than TM-3 (AC O57413). In Protobothrops mucrosquamatus (Taiwan habu), this protein is Snake venom metalloproteinase TM-1.